The sequence spans 110 residues: Acylphosphatase (110 aa).

The Acylphosphatase-like domain occupies 21 to 108 (TRRYLVTGRV…TNLKSFRIEG (88 aa)). Catalysis depends on residues Arg36 and Asn54.

The protein belongs to the acylphosphatase family.

It carries out the reaction an acyl phosphate + H2O = a carboxylate + phosphate + H(+). The polypeptide is Acylphosphatase (acyP) (Koribacter versatilis (strain Ellin345)).